A 479-amino-acid chain; its full sequence is MERDERPPSGGGGGGGSAGFLEPPAALPPPPRNGFCQDELAELDPSTISVPDDRAEQRTCLICGDRATGLHYGIISCEGCKGFFKRSICNKRVYRCSRDKNCVMSRKQRNRCQYCRLLKCLQMGMNRKAIREDGMPGGRNKSIGPVQISEEEIERIMSGQEFEEEANHWSNHGDSDHSSPGNRASESNQPSPGSTLSSRSVELNGFMAFRDQYMGMSVPPHYQYIPHLFSYSAHSPLLPPQARSLDPQSYSLIHQLVSAEDLEPLGTPMLIEDGYAVTQAELFALLCRLADELLFRQIAWIKKLPFFCELSIKDYTCLLSSTWQELILLSSLTVYSKQIFGELADVTAKYSPSDEELHRFSDEGMEVIERLIYLYHKFHQLKVSNEEYACMKAINFLNQDIRGLTSASQLEQLNKRYWYICQDFTEYKYTHQPNRFPDLMMCLPEIRYIAGKMVNVPLEQLPLLFKVVLHSCKTSVGKE.

Residues 1–32 (MERDERPPSGGGGGGGSAGFLEPPAALPPPPR) form a disordered region. A compositionally biased stretch (gly residues) spans 9–18 (SGGGGGGGSA). A DNA-binding region (nuclear receptor) is located at residues 57-132 (QRTCLICGDR…MGMNRKAIRE (76 aa)). Zn(2+) is bound by residues cysteine 60, cysteine 63, cysteine 77, cysteine 80, cysteine 96, cysteine 102, cysteine 112, and cysteine 115. 2 NR C4-type zinc fingers span residues 60 to 80 (CLIC…CEGC) and 96 to 120 (CSRD…LLKC). Disordered stretches follow at residues 131–150 (REDG…QISE) and 162–198 (FEEE…TLSS). Over residues 165 to 177 (EANHWSNHGDSDH) the composition is skewed to basic and acidic residues. The interval 172–252 (HGDSDHSSPG…RSLDPQSYSL (81 aa)) is sufficient for interaction with UIMC1. Polar residues predominate over residues 178-198 (SSPGNRASESNQPSPGSTLSS). Residues 248 to 479 (QSYSLIHQLV…HSCKTSVGKE (232 aa)) form the NR LBD domain.

It belongs to the nuclear hormone receptor family. NR6 subfamily. Homodimer. Interacts with UIMC1.

The protein localises to the nucleus. In terms of biological role, orphan nuclear receptor that binds to a response element containing the sequence 5'-TCAAGGTCA-3'. Acts as a regulator of embryonic stem cell pluripotency by mediating repression of POU5F1/OCT4: binds to the DR0 element within the POU5F1/OCT4 promoter and inhibits POU5F1/OCT4 expression during embryonic stem cell differentiation. Involved in the regulation of gene expression in germ cell development during gametogenesis. The sequence is that of Nuclear receptor subfamily 6 group A member 1 (NR6A1) from Sus scrofa (Pig).